The chain runs to 670 residues: tRNA 5-methylaminomethyl-2-thiouridine biosynthesis bifunctional protein MnmC (670 aa).

The tRNA (mnm(5)s(2)U34)-methyltransferase stretch occupies residues 1–245 (MKPIAIQPAS…KREMLTGALS (245 aa)). Positions 271 to 670 (VGGGIASALL…RKLLKGRAAS (400 aa)) are FAD-dependent cmnm(5)s(2)U34 oxidoreductase.

The protein in the N-terminal section; belongs to the methyltransferase superfamily. tRNA (mnm(5)s(2)U34)-methyltransferase family. It in the C-terminal section; belongs to the DAO family. The cofactor is FAD.

It is found in the cytoplasm. The enzyme catalyses 5-aminomethyl-2-thiouridine(34) in tRNA + S-adenosyl-L-methionine = 5-methylaminomethyl-2-thiouridine(34) in tRNA + S-adenosyl-L-homocysteine + H(+). Catalyzes the last two steps in the biosynthesis of 5-methylaminomethyl-2-thiouridine (mnm(5)s(2)U) at the wobble position (U34) in tRNA. Catalyzes the FAD-dependent demodification of cmnm(5)s(2)U34 to nm(5)s(2)U34, followed by the transfer of a methyl group from S-adenosyl-L-methionine to nm(5)s(2)U34, to form mnm(5)s(2)U34. This Cronobacter sakazakii (strain ATCC BAA-894) (Enterobacter sakazakii) protein is tRNA 5-methylaminomethyl-2-thiouridine biosynthesis bifunctional protein MnmC.